The sequence spans 193 residues: MTYEMPKLPYANNALEPVISQQTIDYHYGKHLQTYVNNLNSLVPGTEYEGKTVEAIVASAPDGAIFNNAGQVLNHTLYFLQFAPKPAKNEPAGKLGEAIKRDFGSFENFKKEFNAASVGLFGSGWAWLSVDKDGKLHITKEPNGSNPVRAGLKPLLGFDVWEHAYYLDYQNRRADHVNKLWEIIDWDVVEKRL.

The Fe cation site is built by H27, H75, D159, and H163.

The protein belongs to the iron/manganese superoxide dismutase family. As to quaternary structure, homodimer. Fe cation is required as a cofactor.

It catalyses the reaction 2 superoxide + 2 H(+) = H2O2 + O2. Destroys superoxide anion radicals which are normally produced within the cells and which are toxic to biological systems. The chain is Superoxide dismutase [Fe] (sodB) from Bacteroides fragilis (strain YCH46).